We begin with the raw amino-acid sequence, 132 residues long: Phosphomevalonate dehydratase small subunit (132 aa).

The active-site Proton acceptor is the serine 61.

The protein belongs to the AcnX type II small subunit family. Heterodimer composed of a large subunit (PMDh-L) and a small subunit (PMDh-S).

It catalyses the reaction (R)-5-phosphomevalonate = (2E)-3-methyl-5-phosphooxypent-2-enoate + H2O. It functions in the pathway isoprenoid biosynthesis; isopentenyl diphosphate biosynthesis via mevalonate pathway. Its function is as follows. Component of a hydro-lyase that catalyzes the dehydration of mevalonate 5-phosphate (MVA5P) to form trans-anhydromevalonate 5-phosphate (tAHMP). Involved in the archaeal mevalonate (MVA) pathway, which provides fundamental precursors for isoprenoid biosynthesis, such as isopentenyl diphosphate (IPP) and dimethylallyl diphosphate (DMAPP). This Archaeoglobus fulgidus (strain ATCC 49558 / DSM 4304 / JCM 9628 / NBRC 100126 / VC-16) protein is Phosphomevalonate dehydratase small subunit.